Reading from the N-terminus, the 312-residue chain is Pantothenate kinase (312 aa).

97–104 (GSVAVGKS) contributes to the ATP binding site.

This sequence belongs to the prokaryotic pantothenate kinase family.

The protein resides in the cytoplasm. It carries out the reaction (R)-pantothenate + ATP = (R)-4'-phosphopantothenate + ADP + H(+). Its pathway is cofactor biosynthesis; coenzyme A biosynthesis; CoA from (R)-pantothenate: step 1/5. The chain is Pantothenate kinase from Mycolicibacterium gilvum (strain PYR-GCK) (Mycobacterium gilvum (strain PYR-GCK)).